The following is a 1009-amino-acid chain: DNA ligase 4 (1009 aa).

2 disordered regions span residues 1–34 and 51–72; these read METD…APTL and KKKP…LSAA. The span at 51 to 65 shows a compositional bias: basic residues; the sequence is KKKPVGPAGNRRKAG. E315, K317, L318, R322, E384, F424, E484, K489, K506, and K508 together coordinate ATP. Catalysis depends on K317, which acts as the N6-AMP-lysine intermediate. E384 lines the Mg(2+) pocket. Residue E484 participates in Mg(2+) binding. BRCT domains are found at residues 715–808 and 887–995; these read PSGH…PDLL and PCGW…QHMP.

It belongs to the ATP-dependent DNA ligase family. It depends on Mg(2+) as a cofactor.

Its subcellular location is the nucleus. It carries out the reaction ATP + (deoxyribonucleotide)n-3'-hydroxyl + 5'-phospho-(deoxyribonucleotide)m = (deoxyribonucleotide)n+m + AMP + diphosphate.. In terms of biological role, DNA ligase involved in DNA non-homologous end joining (NHEJ); required for double-strand break (DSB) repair. In Emericella nidulans (strain FGSC A4 / ATCC 38163 / CBS 112.46 / NRRL 194 / M139) (Aspergillus nidulans), this protein is DNA ligase 4 (lig4).